Reading from the N-terminus, the 190-residue chain is Inosine triphosphate pyrophosphatase (190 aa).

8–13 (TGNANK) provides a ligand contact to ITP. Residue E37 participates in Mg(2+) binding. ITP contacts are provided by residues K49, 65–66 (DT), K82, 140–143 (FGWD), K163, and 168–169 (HR).

The protein belongs to the HAM1 NTPase family. As to quaternary structure, homodimer. Requires Mg(2+) as cofactor. The cofactor is Mn(2+).

It localises to the cytoplasm. Its subcellular location is the nucleus. It carries out the reaction ITP + H2O = IMP + diphosphate + H(+). It catalyses the reaction dITP + H2O = dIMP + diphosphate + H(+). The catalysed reaction is XTP + H2O = XMP + diphosphate + H(+). Pyrophosphatase that hydrolyzes non-canonical purine nucleotides such as inosine triphosphate (ITP), deoxyinosine triphosphate (dITP) or xanthosine 5'-triphosphate (XTP) to their respective monophosphate derivatives. The enzyme does not distinguish between the deoxy- and ribose forms. Probably excludes non-canonical purines from RNA and DNA precursor pools, thus preventing their incorporation into RNA and DNA and avoiding chromosomal lesions. The protein is Inosine triphosphate pyrophosphatase of Batrachochytrium dendrobatidis (strain JAM81 / FGSC 10211) (Frog chytrid fungus).